The chain runs to 92 residues: Large ribosomal subunit protein eL43 (92 aa).

The segment at 39-60 (CSFCGKKTVRRGAAGIWSCHSC) adopts a C4-type zinc-finger fold.

Belongs to the eukaryotic ribosomal protein eL43 family.

This Candida glabrata (strain ATCC 2001 / BCRC 20586 / JCM 3761 / NBRC 0622 / NRRL Y-65 / CBS 138) (Yeast) protein is Large ribosomal subunit protein eL43 (RPL43).